A 677-amino-acid polypeptide reads, in one-letter code: Methionine--tRNA ligase (677 aa).

Residues 15-25 (PYANGSIHLGH) carry the 'HIGH' region motif. Residues C146, C149, C159, and C162 each coordinate Zn(2+). Residues 333 to 337 (KMSKS) carry the 'KMSKS' region motif. Residue K336 coordinates ATP. The tRNA-binding domain maps to 575–677 (DFAKIDLRVA…SGAKPGQQVK (103 aa)).

Belongs to the class-I aminoacyl-tRNA synthetase family. MetG type 1 subfamily. In terms of assembly, homodimer. The cofactor is Zn(2+).

It localises to the cytoplasm. The catalysed reaction is tRNA(Met) + L-methionine + ATP = L-methionyl-tRNA(Met) + AMP + diphosphate. In terms of biological role, is required not only for elongation of protein synthesis but also for the initiation of all mRNA translation through initiator tRNA(fMet) aminoacylation. The sequence is that of Methionine--tRNA ligase from Cronobacter sakazakii (strain ATCC BAA-894) (Enterobacter sakazakii).